The following is a 199-amino-acid chain: Inner membrane protein E199L (199 aa).

N131 carries an N-linked (GlcNAc...) asparagine; by host glycan. A helical membrane pass occupies residues 150-170 (INVMNHPFLTLILIILILVII).

This sequence belongs to the asfivirus E199L family. As to quaternary structure, interacts with host PYCR2; this interaction results in autophagy activation.

It localises to the virion membrane. Its subcellular location is the host membrane. In terms of biological role, essential for viral fusion with host endosomal membrane and core release. Not required for virus morphogenesis and egress. Induces complete autophagy through the interaction with and down-regulation of host PYCR2. In African swine fever virus (isolate Pig/Kenya/KEN-50/1950) (ASFV), this protein is Inner membrane protein E199L.